Here is a 511-residue protein sequence, read N- to C-terminus: Small ribosomal subunit protein uS4m (511 aa).

One can recognise an S4 RNA-binding domain in the interval 202–272 (KRLDVVLYRS…IKNNLFSNIN (71 aa)).

This sequence belongs to the universal ribosomal protein uS4 family.

The protein localises to the mitochondrion. This chain is Small ribosomal subunit protein uS4m (RPS4), found in Prototheca wickerhamii.